The primary structure comprises 489 residues: UDP-glycosyltransferase 85A1 (489 aa).

UDP-alpha-D-glucose-binding positions include Ser-307, 364–366 (CPQ), 381–389 (HCGWNSILE), and 403–406 (FADQ).

It belongs to the UDP-glycosyltransferase family. In terms of tissue distribution, expressed in root tips, lateral root initials, root apex, shoots, leaf periphery, leaf primordia and flowers.

Functionally, involved in the O-glucosylation of trans-zeatin and dihydrozeatin. Also active in vitro on cis-zeatin. Not active on N-glucosylated substrates. The protein is UDP-glycosyltransferase 85A1 (UGT85A1) of Arabidopsis thaliana (Mouse-ear cress).